Consider the following 444-residue polypeptide: Divalent metal cation transporter MntH (444 aa).

The next 11 helical transmembrane spans lie at glycine 31–glycine 51, phenylalanine 68–glycine 88, leucine 115–glycine 135, isoleucine 146–methionine 166, alanine 175–alanine 195, valine 212–proline 232, valine 267–phenylalanine 287, alanine 303–leucine 323, leucine 356–alanine 376, leucine 381–valine 401, and leucine 413–leucine 433.

The protein belongs to the NRAMP family.

Its subcellular location is the cell inner membrane. Its function is as follows. H(+)-stimulated, divalent metal cation uptake system. The polypeptide is Divalent metal cation transporter MntH (Xanthomonas campestris pv. campestris (strain ATCC 33913 / DSM 3586 / NCPPB 528 / LMG 568 / P 25)).